The chain runs to 154 residues: Putative glutamine amidotransferase-like protein RP712 (154 aa).

The region spanning M1–K94 is the Glutamine amidotransferase type-1 domain.

In Rickettsia prowazekii (strain Madrid E), this protein is Putative glutamine amidotransferase-like protein RP712.